A 219-amino-acid polypeptide reads, in one-letter code: 2-phospho-L-lactate guanylyltransferase (219 aa).

This sequence belongs to the CofC family. Homodimer.

The enzyme catalyses (2S)-2-phospholactate + GTP + H(+) = (2S)-lactyl-2-diphospho-5'-guanosine + diphosphate. Its pathway is cofactor biosynthesis; coenzyme F420 biosynthesis. Functionally, guanylyltransferase that catalyzes the activation of (2S)-2-phospholactate (2-PL) as (2S)-lactyl-2-diphospho-5'-guanosine, via the condensation of 2-PL with GTP. It is involved in the biosynthesis of coenzyme F420, a hydride carrier cofactor. The protein is 2-phospho-L-lactate guanylyltransferase of Methanocella arvoryzae (strain DSM 22066 / NBRC 105507 / MRE50).